A 361-amino-acid polypeptide reads, in one-letter code: Chorismate synthase (361 aa).

Arg-48 contacts NADP(+). FMN is bound by residues 126 to 128, Gly-286, 301 to 305, and Arg-328; these read RFS and KPTPS.

This sequence belongs to the chorismate synthase family. Requires FMNH2 as cofactor.

It catalyses the reaction 5-O-(1-carboxyvinyl)-3-phosphoshikimate = chorismate + phosphate. It functions in the pathway metabolic intermediate biosynthesis; chorismate biosynthesis; chorismate from D-erythrose 4-phosphate and phosphoenolpyruvate: step 7/7. Its function is as follows. Catalyzes the anti-1,4-elimination of the C-3 phosphate and the C-6 proR hydrogen from 5-enolpyruvylshikimate-3-phosphate (EPSP) to yield chorismate, which is the branch point compound that serves as the starting substrate for the three terminal pathways of aromatic amino acid biosynthesis. This reaction introduces a second double bond into the aromatic ring system. This Korarchaeum cryptofilum (strain OPF8) protein is Chorismate synthase.